We begin with the raw amino-acid sequence, 152 residues long: Protein NrdI (152 aa).

This sequence belongs to the NrdI family.

In terms of biological role, probably involved in ribonucleotide reductase function. The protein is Protein NrdI of Rhodococcus opacus (strain B4).